The sequence spans 435 residues: S-phase entry cyclin-5 (435 aa).

2 disordered regions span residues 36–70 and 104–126; these read KRAL…NPLS and NDRT…DAAS. Low complexity predominate over residues 41–52; sequence KNDSSSKQQVQD. The span at 110–124 shows a compositional bias: acidic residues; that stretch reads EQEEEEEEEGEDDDA.

It belongs to the cyclin family. Cyclin AB subfamily.

In terms of biological role, required for efficient progression through S phase and possibly for the normal progression through meiosis. Interacts with CDC28. This Saccharomyces cerevisiae (strain ATCC 204508 / S288c) (Baker's yeast) protein is S-phase entry cyclin-5 (CLB5).